The primary structure comprises 444 residues: Phosphoglucosamine mutase (444 aa).

Catalysis depends on serine 101, which acts as the Phosphoserine intermediate. Residues serine 101, aspartate 240, aspartate 242, and aspartate 244 each contribute to the Mg(2+) site. Phosphoserine is present on serine 101.

Belongs to the phosphohexose mutase family. The cofactor is Mg(2+). In terms of processing, activated by phosphorylation.

It carries out the reaction alpha-D-glucosamine 1-phosphate = D-glucosamine 6-phosphate. Catalyzes the conversion of glucosamine-6-phosphate to glucosamine-1-phosphate. The chain is Phosphoglucosamine mutase from Aeromonas hydrophila subsp. hydrophila (strain ATCC 7966 / DSM 30187 / BCRC 13018 / CCUG 14551 / JCM 1027 / KCTC 2358 / NCIMB 9240 / NCTC 8049).